A 460-amino-acid polypeptide reads, in one-letter code: Phosphoglucosamine mutase (460 aa).

Ser102 (phosphoserine intermediate) is an active-site residue. Mg(2+)-binding residues include Ser102, Asp241, Asp243, and Asp245. Ser102 carries the phosphoserine modification.

Belongs to the phosphohexose mutase family. Mg(2+) is required as a cofactor. In terms of processing, activated by phosphorylation.

It carries out the reaction alpha-D-glucosamine 1-phosphate = D-glucosamine 6-phosphate. Catalyzes the conversion of glucosamine-6-phosphate to glucosamine-1-phosphate. This is Phosphoglucosamine mutase from Verminephrobacter eiseniae (strain EF01-2).